We begin with the raw amino-acid sequence, 1052 residues long: Kinesin-like protein KIF11 (1052 aa).

Residues 17-358 (NIQVVVRCRP…LEYAHRAKNI (342 aa)) enclose the Kinesin motor domain. 104-111 (GQTGTGKT) lines the ATP pocket. At K145 the chain carries N6-acetyllysine. Residues 364–478 (VNQKLTKKAL…ETKLQLVKEE (115 aa)) are a coiled coil. Residue T457 is modified to Phosphothreonine. K476 participates in a covalent cross-link: Glycyl lysine isopeptide (Lys-Gly) (interchain with G-Cter in SUMO2). Position 925 is a phosphothreonine (T925). Disordered stretches follow at residues 950 to 1026 (LQKK…LNPV) and 1033 to 1052 (EASD…SINL). Residues 963-988 (EASKETSQDMDEEREALEQCTEELVS) adopt a coiled-coil conformation. Residues 1016–1026 (KDKENRGLNPV) show a composition bias toward basic and acidic residues.

It belongs to the TRAFAC class myosin-kinesin ATPase superfamily. Kinesin family. BimC subfamily. As to quaternary structure, interacts with the thyroid hormone receptor in the presence of thyroid hormone. Component of a large chromatin remodeling complex, at least composed of MYSM1, PCAF, RBM10 and KIF11/TRIP5. Interacts with RARRES1 and AGBL2. Phosphorylated exclusively on serine during S phase, but on both serine and Thr-925 during mitosis, so controlling the association of KIF11 with the spindle apparatus (probably during early prophase).

The protein resides in the cytoplasm. It is found in the cytoskeleton. Its subcellular location is the spindle pole. In terms of biological role, motor protein required for establishing a bipolar spindle during mitosis. Required in non-mitotic cells for transport of secretory proteins from the Golgi complex to the cell surface. The sequence is that of Kinesin-like protein KIF11 (Kif11) from Mus musculus (Mouse).